The primary structure comprises 575 residues: Sorting nexin-41 (575 aa).

Residues 30 to 66 (TDGPDDYDFTEPSINGSSDENAQSNAVAEPIEETDEP) are disordered. A compositionally biased stretch (polar residues) spans 41–55 (PSINGSSDENAQSNA). Residues 101-221 (QGKNPEVIRI…QKFLNPEYFW (121 aa)) enclose the PX domain. The a 1,2-diacyl-sn-glycero-3-phospho-(1D-myo-inositol-3-phosphate) site is built by R139, S141, K165, and R188. The tract at residues 467-486 (FRSSASPNNKSGSDSISSEV) is disordered. Over residues 469 to 484 (SSASPNNKSGSDSISS) the composition is skewed to polar residues.

The protein belongs to the sorting nexin family.

It is found in the endosome membrane. Its subcellular location is the endomembrane system. Functionally, may be required for cytoplasm to vacuole transport (Cvt) and pexophagy. This is Sorting nexin-41 (SNX41) from Kluyveromyces lactis (strain ATCC 8585 / CBS 2359 / DSM 70799 / NBRC 1267 / NRRL Y-1140 / WM37) (Yeast).